The primary structure comprises 388 residues: Norsolorinic acid reductase A (388 aa).

Asp69 contributes to the NADP(+) binding site. Residue Tyr74 is the Proton donor of the active site. His148 is a substrate binding site. NADP(+) is bound by residues 178 to 179, Gln204, 233 to 243, and 300 to 308; these read SD, GVLGRGQFRSA, and RKVEHLKEN.

This sequence belongs to the aldo/keto reductase family. Aldo/keto reductase 2 subfamily.

The protein operates within mycotoxin biosynthesis; aflatoxin biosynthesis. Its function is as follows. Norsolorinic acid reductase; part of the gene cluster that mediates the biosynthesis of aflatoxins, a group of polyketide-derived furanocoumarins, and part of the most toxic and carcinogenic compounds among the known mycotoxins. The four major aflatoxins produced by A.parasiticus are aflatoxin B1 (AFB1), aflatoxin B2 (AFB2), aflatoxin G1 (AFG1) and aflatoxin G2 (AFG2). Within the aflatoxin pathway, the norsolorinic acid reductase aflE may play a role in the conversion of norsolorinic acid (NOR) to averantin (AVN). The biosynthesis of aflatoxins begins with the norsolorinic acid synthase aflC that combines a hexanoyl starter unit produced by the fatty acid synthase aflA/aflB and 7 malonyl-CoA extender units to synthesize the precursor NOR. The second step is the conversion of NOR to averantin and requires the norsolorinic acid ketoreductase aflD, which catalyzes the dehydration of norsolorinic acid to form (1'S)-averantin. The norsolorinic acid reductases aflE and aflF may also play a role in the conversion of NOR to AVN. The cytochrome P450 monooxygenase aflG then catalyzes the hydroxylation of AVN to 5'hydroxyaverantin (HAVN). The next step is performed by the 5'-hydroxyaverantin dehydrogenase aflH that transforms HAVN to 5'-oxoaverantin (OAVN) which is further converted to averufin (AVF) by aflK that plays a dual role in the pathway, as a 5'-oxoaverantin cyclase that mediates conversion of 5'-oxoaverantin, as well as a versicolorin B synthase in a later step in the pathway. The averufin oxidase aflI catalyzes the conversion of AVF to versiconal hemiacetal acetate (VHA). VHA is then the substrate for the versiconal hemiacetal acetate esterase aflJ to yield versiconal (VAL). Versicolorin B synthase aflK then converts VAL to versicolorin B (VERB) by closing the bisfuran ring of aflatoxin which is required for DNA-binding, thus giving to aflatoxin its activity as a mutagen. Then, the activity of the versicolorin B desaturase aflL leads to versicolorin A (VERA). A branch point starts from VERB since it can also be converted to dihydrodemethylsterigmatocystin (DMDHST), probably also by aflL, VERA being a precursor for aflatoxins B1 and G1, and DMDHST for aflatoxins B2 and G2. Next, the versicolorin reductase aflM and the cytochrome P450 monooxygenase aflN are involved in conversion of VERA to demethylsterigmatocystin (DMST). AflX and aflY seem also involved in this step, through probable aflX-mediated epoxide ring-opening step following versicolorin A oxidation and aflY-mediated Baeyer-Villiger oxidation required for the formation of the xanthone ring. The methyltransferase aflO then leads to the modification of DMST to sterigmatocystin (ST), and of DMDHST to dihydrosterigmatocystin (DHST). Both ST and DHST are then substrates of the O-methyltransferase aflP to yield O-methylsterigmatocystin (OMST) and dihydro-O-methylsterigmatocystin (DHOMST), respectively. Finally OMST is converted to aflatoxins B1 and G1, and DHOMST to aflatoxins B2 and G2, via the action of several enzymes including O-methylsterigmatocystin oxidoreductase aflQ, the cytochrome P450 monooxygenase aflU, but also the NADH-dependent flavin oxidoreductase nadA which is specifically required for the synthesis of AFG1. This Aspergillus parasiticus (strain ATCC 56775 / NRRL 5862 / SRRC 143 / SU-1) protein is Norsolorinic acid reductase A.